A 34-amino-acid chain; its full sequence is Subtilosin-A (34 aa).

The cyclopeptide (Asn-Gly) cross-link spans Asn-1–Gly-34. The 2-cysteinyl-D-allo-threonine (Cys-Thr) cross-link spans Cys-7–Thr-28. Positions Cys-13–Phe-22 form a cross-link, 2-cysteinyl-L-phenylalanine (Cys-Phe).

Belongs to the bacteriocin class V family. Post-translationally, alpha-amino of Asn-1 is covalently linked with the carboxyl of Gly-34 to form a cyclopeptide. Thioether cross-links are formed between cysteines and the alpha-carbons of other amino acids, Cys-7 to Thr-28 and Cys-13 to Phe-22. In forming this cross-link, Thr-28 is converted to D-amino acid.

It localises to the secreted. Has bactericidal activity against some Gram-positive bacteria. The protein is Subtilosin-A of Cytobacillus firmus (Bacillus firmus).